A 289-amino-acid chain; its full sequence is Trihelix transcription factor GT-3b (289 aa).

Positions 42-98 (WSVEETKELIGIRGELDQTFMETKRNKLLWEVISNKMRDKSFPRSPEQCKCKWKNLV) constitute a Myb-like domain. The Bipartite nuclear localization signal signature appears at 65–81 (KRNKLLWEVISNKMRDK). A disordered region spans residues 137–200 (ESEGGGGGTS…SNSSNSNNGV (64 aa)). Acidic residues predominate over residues 156–168 (SDEEEENVNEELV). Residues 179 to 188 (PKKNIAKKRK) carry the Nuclear localization signal motif. Low complexity predominate over residues 190–199 (GSNSSNSNNG). The stretch at 223–275 (EAREKERAEKEEEWRRKMEELEKERLAMERMWRDREEQRRSREEMRAEKRDSL) forms a coiled coil.

As to quaternary structure, heterodimer with GT-3A. Associated with the mediator complex.

The protein localises to the nucleus. In terms of biological role, probable transcription factor that may play a role in the induction of CAM4 in response to pathogen and salt. The chain is Trihelix transcription factor GT-3b (GT-3B) from Arabidopsis thaliana (Mouse-ear cress).